A 113-amino-acid polypeptide reads, in one-letter code: 4-cresol dehydrogenase [hydroxylating] cytochrome c subunit (113 aa).

An N-terminal signal peptide occupies residues 1 to 33; the sequence is MTFPFSGAAVKRMLVTGVVLPFGLLVAAGQAQA. Cys48, Cys51, His52, and Met83 together coordinate heme c.

Tetramer of two cytochrome subunits and two flavoprotein subunits. Binds 1 heme c group covalently per subunit.

Its pathway is aromatic compound metabolism; p-cresol degradation. This is the heme-containing component of the p-cresol methylhydroxylase. It accepts electrons from the flavoprotein subunit. This Pseudomonas putida (Arthrobacter siderocapsulatus) protein is 4-cresol dehydrogenase [hydroxylating] cytochrome c subunit (pchC).